Consider the following 148-residue polypeptide: Large ribosomal subunit protein bL9 (148 aa).

Belongs to the bacterial ribosomal protein bL9 family.

Functionally, binds to the 23S rRNA. The chain is Large ribosomal subunit protein bL9 from Pseudomonas putida (strain GB-1).